The chain runs to 292 residues: Polyketide transferase af380 (292 aa).

The interval 46–267 (DVAVWFQQQG…FDLVAGRGHM (222 aa)) is abhydrolase domain.

It belongs to the polyketide transferase af380 family.

It carries out the reaction fumagillol + dodecapentaneoyl-[polyketide synthase] = prefumagillin + holo-[polyketide synthase]. It functions in the pathway secondary metabolite biosynthesis; terpenoid biosynthesis. Its function is as follows. Polyketide transferase; part of the gene cluster that mediates the biosynthesis of fumagillin, a meroterpenoid that has numerous biological activities including irreversible inhibition of human type 2 methionine aminopeptidase (METAP2). Within the pathway, the polyketide transferase af380 catalyzes the transfer of a dodecapentaenoyl group synthesized by the polyketide synthase af370 onto 5R-hydroxy-seco-sesquiterpene to produce prefumagillin. The pathway begins with the conversion of farnesyl pyrophosphate (FPP) to beta-trans-bergamotene by the membrane-bound beta-trans-bergamotene synthase af520. The multifunctional cytochrome P450 monooxygenase af510 then converts beta-trans-bergamotene into 5-keto-demethoxyfumagillol via several oxydation steps. 5-keto-demethoxyfumagillol is then subjected to successive C-6 hydroxylation and O-methylation by the dioxygenase af480 and O-methyltransferase af390-400, respectively, to yield 5-keto-fumagillol, which is then stereoselectively reduced by the keto-reductase af490 to 5R-hydroxy-seco-sesquiterpene. The next step is the polyketide transferase af380-catalyzed transfer of a dodecapentaenoyl group synthesized by the polyketide synthase af370 onto 5R-hydroxy-seco-sesquiterpene which leads to the production of prefumagillin. Finally, oxidative cleavage by the monooxygenase af470 converts prefumagillin to fumagillin. The polypeptide is Polyketide transferase af380 (Aspergillus fumigatus (strain ATCC MYA-4609 / CBS 101355 / FGSC A1100 / Af293) (Neosartorya fumigata)).